The sequence spans 311 residues: Malate dehydrogenase (311 aa).

NAD(+) contacts are provided by residues 7 to 13 (GAAGGIG) and Asp34. The substrate site is built by Arg81 and Arg87. NAD(+)-binding positions include Asn94 and 117-119 (ITN). Asn119 and Arg153 together coordinate substrate. His177 serves as the catalytic Proton acceptor. Residue Met227 coordinates NAD(+).

This sequence belongs to the LDH/MDH superfamily. MDH type 1 family. In terms of assembly, homodimer.

It carries out the reaction (S)-malate + NAD(+) = oxaloacetate + NADH + H(+). Its function is as follows. Catalyzes the reversible oxidation of malate to oxaloacetate. The chain is Malate dehydrogenase from Shewanella sp. (strain ANA-3).